We begin with the raw amino-acid sequence, 454 residues long: Putative serine/threonine-protein phosphatase C27B7.6 (454 aa).

The Mn(2+) site is built by D65, H67, D93, and N125. Residue H126 is the Proton donor of the active site. Residues H174 and H252 each contribute to the Mn(2+) site. Positions 414–454 are disordered; that stretch reads RKKLGMTTSTTPPPPRTPSPDAPLAQSPPIPRSPPSSTENA. The segment covering 424-447 has biased composition (pro residues); that stretch reads TPPPPRTPSPDAPLAQSPPIPRSP.

Belongs to the PPP phosphatase family. PP-1 subfamily. It depends on Mn(2+) as a cofactor.

It carries out the reaction O-phospho-L-seryl-[protein] + H2O = L-seryl-[protein] + phosphate. The catalysed reaction is O-phospho-L-threonyl-[protein] + H2O = L-threonyl-[protein] + phosphate. In Caenorhabditis elegans, this protein is Putative serine/threonine-protein phosphatase C27B7.6.